The chain runs to 415 residues: MMLGPEGGEGYVVKLRGLPWSCSIEDVQNFLSDCTIHDGVAGVHFIYTREGRQSGEAFVELESEDDVKLALKKDRESMGHRYIEVFKSHRTEMDWVLKHSGPNSADSANDGFVRLRGLPFGCTKEEIVQFFSGLEIVPNGITLPVDPEGKITGEAFVQFASQELAEKALGKHKERIGHRYIEVFKSSQEEVRSYSDPPLKFMSVQRPGPYDRPGTARRYIGIVKQAGLDRMRSGAYSAGYGGYEEYSGLSDGYGFTTDLFGRDLSYCLSGMYDHRYGDSEFTVQSTTGHCVHMRGLPYKATENDIYNFFSPLNPVRVHIEIGPDGRVTGEADVEFATHEEAVAAMSKDRANMQHRYIELFLNSTTGASNGAYSSQVMQGMGVSAAQATYSGLESQSVSGCYGAGYSGQNSMGGYD.

M1 is subject to N-acetylmethionine. At M2 the chain carries N-acetylmethionine; in Heterogeneous nuclear ribonucleoprotein F, N-terminally processed. In terms of domain architecture, RRM 1 spans 11–90 (YVVKLRGLPW…RYIEVFKSHR (80 aa)). K72 participates in a covalent cross-link: Glycyl lysine isopeptide (Lys-Gly) (interchain with G-Cter in SUMO). The tract at residues 81–86 (RYIEVF) is interaction with RNA. Residue K87 forms a Glycyl lysine isopeptide (Lys-Gly) (interchain with G-Cter in SUMO2) linkage. Phosphoserine is present on residues S104, S107, and S161. Positions 111–188 (GFVRLRGLPF…RYIEVFKSSQ (78 aa)) constitute an RRM 2 domain. K167 participates in a covalent cross-link: Glycyl lysine isopeptide (Lys-Gly) (interchain with G-Cter in SUMO2). The segment at 179–184 (RYIEVF) is interaction with RNA. Residue K185 forms a Glycyl lysine isopeptide (Lys-Gly) (interchain with G-Cter in SUMO2) linkage. Residues S187, S193, and S195 each carry the phosphoserine modification. K200 carries the post-translational modification N6-acetyllysine; alternate. K200 is covalently cross-linked (Glycyl lysine isopeptide (Lys-Gly) (interchain with G-Cter in SUMO2); alternate). At T215 the chain carries Phosphothreonine. Position 224 is an N6-acetyllysine; alternate (K224). K224 participates in a covalent cross-link: Glycyl lysine isopeptide (Lys-Gly) (interchain with G-Cter in SUMO2); alternate. A Phosphoserine modification is found at S265. An RRM 3 domain is found at 289–366 (HCVHMRGLPY…IELFLNSTTG (78 aa)). The segment at 355–360 (RYIELF) is interaction with RNA.

As to quaternary structure, identified in the spliceosome C complex. Interacts with AGO1, AGO2, TBP and TXNL4/DIM1. In terms of processing, sumoylated.

Its subcellular location is the nucleus. It localises to the nucleoplasm. Its function is as follows. Component of the heterogeneous nuclear ribonucleoprotein (hnRNP) complexes which provide the substrate for the processing events that pre-mRNAs undergo before becoming functional, translatable mRNAs in the cytoplasm. Plays a role in the regulation of alternative splicing events. Binds G-rich sequences in pre-mRNAs and keeps target RNA in an unfolded state. The polypeptide is Heterogeneous nuclear ribonucleoprotein F (Hnrnpf) (Mus musculus (Mouse)).